We begin with the raw amino-acid sequence, 361 residues long: GDSL esterase/lipase At2g40250 (361 aa).

The first 28 residues, 1-28, serve as a signal peptide directing secretion; it reads MNRNQHKPMFVTFLINILLLQLLNLTNA. Ser-43 functions as the Nucleophile in the catalytic mechanism. Residues Asp-337 and His-340 contribute to the active site.

Belongs to the 'GDSL' lipolytic enzyme family.

The protein localises to the secreted. The polypeptide is GDSL esterase/lipase At2g40250 (Arabidopsis thaliana (Mouse-ear cress)).